We begin with the raw amino-acid sequence, 771 residues long: Ribonucleoside-diphosphate reductase large subunit (771 aa).

The ATP-cone domain occupies 1–92 (MFVIKRNGYK…VSNLHKETKK (92 aa)). ATP-binding positions include 5 to 6 (KR), 11 to 17 (ENVMFDK), Thr53, Asp57, and Lys88. GDP-binding residues include Ser202 and Ser217. Residues 226–228 (DSI), Lys243, and Arg256 contribute to the dTTP site. GDP is bound at residue Asn427. Asn427 acts as the Proton acceptor in catalysis. Cys429 acts as the Cysteine radical intermediate in catalysis. GDP-binding positions include Glu431 and 603-606 (TAST). The Proton acceptor role is filled by Glu431.

The protein belongs to the ribonucleoside diphosphate reductase large chain family. As to quaternary structure, interacts with RNR2/OPG047 subunit. The cofactor is Mg(2+).

The enzyme catalyses a 2'-deoxyribonucleoside 5'-diphosphate + [thioredoxin]-disulfide + H2O = a ribonucleoside 5'-diphosphate + [thioredoxin]-dithiol. Functionally, ribonucleoside-diphosphate reductase holoenzyme provides the precursors necessary for viral DNA synthesis. Allows virus growth in non-dividing cells. Catalyzes the biosynthesis of deoxyribonucleotides from the corresponding ribonucleotides. The protein is Ribonucleoside-diphosphate reductase large subunit (OPG080) of Homo sapiens (Human).